Reading from the N-terminus, the 389-residue chain is Chalcone synthase 1 (389 aa).

Cys-164 is a catalytic residue.

This sequence belongs to the thiolase-like superfamily. Chalcone/stilbene synthases family.

The enzyme catalyses (E)-4-coumaroyl-CoA + 3 malonyl-CoA + 3 H(+) = 2',4,4',6'-tetrahydroxychalcone + 3 CO2 + 4 CoA. It functions in the pathway secondary metabolite biosynthesis; flavonoid biosynthesis. Functionally, the primary product of this enzyme is 4,2',4',6'-tetrahydroxychalcone (also termed naringenin-chalcone or chalcone) which can under specific conditions spontaneously isomerize into naringenin. In Pisum sativum (Garden pea), this protein is Chalcone synthase 1 (CHS1).